We begin with the raw amino-acid sequence, 314 residues long: Ribosomal protein L11 methyltransferase (314 aa).

The S-adenosyl-L-methionine site is built by Thr161, Gly182, Asp204, and Asn248.

It belongs to the methyltransferase superfamily. PrmA family.

Its subcellular location is the cytoplasm. The catalysed reaction is L-lysyl-[protein] + 3 S-adenosyl-L-methionine = N(6),N(6),N(6)-trimethyl-L-lysyl-[protein] + 3 S-adenosyl-L-homocysteine + 3 H(+). Methylates ribosomal protein L11. The protein is Ribosomal protein L11 methyltransferase of Listeria monocytogenes serotype 4b (strain CLIP80459).